The chain runs to 513 residues: Zinc finger protein RFP (513 aa).

The segment at 16 to 57 (CPVCLQYFAEPMMLDCGHNICCACLARCWGTAETNVSCPQCR) adopts an RING-type zinc-finger fold. Zn(2+) contacts are provided by Cys96, His99, Cys118, and His124. Residues 96 to 127 (CEKHREPLKLYCEEDQMPICVVCDRSREHRGH) form a B box-type zinc finger. Coiled coils occupy residues 132-172 (LEEA…AELL) and 282-311 (QKCL…LREA). A B30.2/SPRY domain is found at 298-492 (MQSDMEKIQE…SAAPLIICPM (195 aa)).

The protein belongs to the TRIM/RBCC family. As to quaternary structure, homomultimerizes. Part of a complex consisting of TRIM27, USP7 and MAGEL2; directly interacts with USP7. Interacts with PML, EIF3S6, EPC1, CHD4 and EID1. Interacts with MAGED4, MAGEF1 and MAGEL2. Interacts with PTPN11. Interacts with autophagy receptor p62/SQSTM1. In terms of assembly, (Microbial infection) Interacts with M.tuberculosis PtpA, whick blocks TRIM27-promoted JNK/p38 MAPK pathway activation and cell apoptosis. (Microbial infection) Interacts with herpes simplex virus protein ICP0. Expressed in testis namely within the seminiferous tubules.

The protein resides in the nucleus. The protein localises to the cytoplasm. It localises to the PML body. Its subcellular location is the early endosome. It is found in the mitochondrion. It catalyses the reaction S-ubiquitinyl-[E2 ubiquitin-conjugating enzyme]-L-cysteine + [acceptor protein]-L-lysine = [E2 ubiquitin-conjugating enzyme]-L-cysteine + N(6)-ubiquitinyl-[acceptor protein]-L-lysine.. It functions in the pathway protein modification; protein ubiquitination. Its function is as follows. E3 ubiquitin-protein ligase that mediates ubiquitination of various substrates and thereby plays a role in diffent processes including proliferation, innate immunity, apoptosis, immune response or autophagy. Ubiquitinates PIK3C2B and inhibits its activity by mediating the formation of 'Lys-48'-linked polyubiquitin chains; the function inhibits CD4 T-cell activation. Acts as a regulator of retrograde transport: together with MAGEL2, mediates the formation of 'Lys-63'-linked polyubiquitin chains at 'Lys-220' of WASHC1, leading to promote endosomal F-actin assembly. Has a transcriptional repressor activity by cooperating with EPC1. Induces apoptosis by activating Jun N-terminal kinase and p38 kinase and also increases caspase-3-like activity independently of mitochondrial events. May function in male germ cell development. Has DNA-binding activity and preferentially bound to double-stranded DNA. Forms a complex with and ubiquitinates the ubiquitin-specific protease USP7, which in turn deubiquitinates RIPK1 resulting in the positive regulation of TNF-alpha-induced apoptosis. In addition, acts with USP7 or PTPN11 as an inhibitor of the antiviral signaling pathway by promoting kinase TBK1 ubiquitination and degradation. Acts as a negative regulator of NOD2 signaling by mediating ubiquitination of NOD2, promoting its degradation by the proteasome. Alternatively, facilitates mitophagy via stabilization of active TBK1. Negatively regulates autophagy flux under basal conditions by directly polyubiquitinating ULK1. During starvation-induced autophagy, catalyzes non-degradative ubiquitination of the kinase STK38L promoting its activation and phosphorylation of ULK1 leading to its ubiquitination and degradation to restrain the amplitude and duration of autophagy. In terms of biological role, (Microbial infection) Positively regulates hepatitis C virus replication by suppressing type I IFN response during infection. This chain is Zinc finger protein RFP, found in Homo sapiens (Human).